The chain runs to 439 residues: MAQFFKPQKKSTQPQRIEFTVDSLDHHCVGIGRHQGKAIFIEGALPGEQVKARILDDKKQYAHAALQQVVTPAANRIAPFCNHYRECGGCNAQHLGEADQQAAKEAGLVSLFERLGQIKAPVLEPVLTGESRAYRRVCRLAIKFDKNGRCTRVGFRRRQSNDLVEIEGCPVLAEPLSALIAPLRECLNRLKSQRELGHAELIQAEQGIMMLLRHTGRPNEADRALLVAFAKSQGIDLYLQAADERIEPLHQVFQPSYSLDGLSLAFAPGDFIQVNGPINQSMVAQALAWLGASKDDKVLDLFCGIGNFTLPLARQAREVVGVEGDLAMVARAEENARRNGIDNARFYKADLSGDIVGMSWAREGFDLVLLDPARPGALEVMGHVVKLSPKRVVYVSCNPVTLARDSQVLVKGGYRLVRLGMLDMFPHTGHLESMALFEQ.

Residues 10-68 enclose the TRAM domain; the sequence is KSTQPQRIEFTVDSLDHHCVGIGRHQGKAIFIEGALPGEQVKARILDDKKQYAHAALQQ. The [4Fe-4S] cluster site is built by Cys81, Cys87, Cys90, and Cys169. Residues Gln273, Phe302, Asn307, Glu323, Asp350, and Asp371 each coordinate S-adenosyl-L-methionine. Cys397 functions as the Nucleophile in the catalytic mechanism.

Belongs to the class I-like SAM-binding methyltransferase superfamily. RNA M5U methyltransferase family. RlmD subfamily.

The enzyme catalyses uridine(1939) in 23S rRNA + S-adenosyl-L-methionine = 5-methyluridine(1939) in 23S rRNA + S-adenosyl-L-homocysteine + H(+). In terms of biological role, catalyzes the formation of 5-methyl-uridine at position 1939 (m5U1939) in 23S rRNA. In Aeromonas salmonicida (strain A449), this protein is 23S rRNA (uracil(1939)-C(5))-methyltransferase RlmD.